Consider the following 472-residue polypeptide: MKDSTEKSKPWGGRFQEPTNELVEAFTASISFDRRLYRYDIEGSIAHARMLVRQEIINRKEGFAIVEGLKEIQRDIETGSFEFSPGDEDIHMAIEKDLIRRIGDAGAKLHTGRSRNDQVALDVRLYLRAEIKEILEFMKVLKGAFLELAKKEAETILPGYTHLQKAQPVLLAHYLLAWREMLDRDESRLRDCYRRVNVLPLGAAALAGTSLPIDRAYVARLLKFPEISRNSMDTVSDRDFVAEFLFASSLIMMHLSRFCEDLILWSSGEFNFVEISDAFTTGSSIMPQKKNPDVAELIRGKTGRVYGNLIALLTLLKGLPMTYNRDLQEDKEPLFDTVDTVKACLQILAEMIRNMKFNREKMRQEAEGGFSTATDLAEYLVMKGIPFREAHGIVGKLVSFCIECKKELAQLSMEEFQRFCPVINEDIHDRLSVSNSVRSRKSYGGTACRQVMEQIRQIEEGAYPSTRRRKEA.

The protein belongs to the lyase 1 family. Argininosuccinate lyase subfamily.

The protein localises to the cytoplasm. The enzyme catalyses 2-(N(omega)-L-arginino)succinate = fumarate + L-arginine. It participates in amino-acid biosynthesis; L-arginine biosynthesis; L-arginine from L-ornithine and carbamoyl phosphate: step 3/3. The chain is Argininosuccinate lyase from Syntrophus aciditrophicus (strain SB).